Here is a 100-residue protein sequence, read N- to C-terminus: Urease subunit gamma (100 aa).

Belongs to the urease gamma subunit family. In terms of assembly, heterotrimer of UreA (gamma), UreB (beta) and UreC (alpha) subunits. Three heterotrimers associate to form the active enzyme.

It is found in the cytoplasm. It carries out the reaction urea + 2 H2O + H(+) = hydrogencarbonate + 2 NH4(+). It functions in the pathway nitrogen metabolism; urea degradation; CO(2) and NH(3) from urea (urease route): step 1/1. The protein is Urease subunit gamma of Prochlorococcus marinus (strain NATL2A).